The sequence spans 149 residues: Large ribosomal subunit protein bL9 (149 aa).

The protein belongs to the bacterial ribosomal protein bL9 family.

Binds to the 23S rRNA. The protein is Large ribosomal subunit protein bL9 of Geobacillus kaustophilus (strain HTA426).